Here is a 341-residue protein sequence, read N- to C-terminus: S-adenosylmethionine:tRNA ribosyltransferase-isomerase (341 aa).

Belongs to the QueA family. Monomer.

It is found in the cytoplasm. The catalysed reaction is 7-aminomethyl-7-carbaguanosine(34) in tRNA + S-adenosyl-L-methionine = epoxyqueuosine(34) in tRNA + adenine + L-methionine + 2 H(+). The protein operates within tRNA modification; tRNA-queuosine biosynthesis. Transfers and isomerizes the ribose moiety from AdoMet to the 7-aminomethyl group of 7-deazaguanine (preQ1-tRNA) to give epoxyqueuosine (oQ-tRNA). The sequence is that of S-adenosylmethionine:tRNA ribosyltransferase-isomerase from Staphylococcus aureus (strain USA300).